Reading from the N-terminus, the 65-residue chain is Omega-lycotoxin-Am1f (65 aa).

Residues 1–18 constitute a propeptide that is removed on maturation; the sequence is GDEEDEVEETLPVAEEGR. Cystine bridges form between cysteine 22–cysteine 37, cysteine 29–cysteine 42, cysteine 36–cysteine 62, and cysteine 44–cysteine 60.

It belongs to the neurotoxin omega-lctx family. Expressed by the venom gland.

The protein localises to the secreted. Modulates Cav2.1/CACNA1A voltage-gated calcium channels (P/Q-type currents) in rat cerebellar Purkinje cells and hippocampal CA1-CA3 neurons. At saturating concentrations (&gt;10 nM) decelerates activation kinetics and slightly increases peak amplitude without affecting deactivation kinetics. In vivo, does not cause death when intravenously injected into mice. In rat models, through its activity on Cav2.1/CACNA1A, has an ameliorative effect on memory defects provoked by hyperstimulation of N-methyl-D-aspartate receptors (NMDARs) in the hippocampus. The polypeptide is Omega-lycotoxin-Am1f (Alopecosa marikovskyi (Wolf spider)).